Consider the following 109-residue polypeptide: Putative pterin-4-alpha-carbinolamine dehydratase (109 aa).

Belongs to the pterin-4-alpha-carbinolamine dehydratase family.

The catalysed reaction is (4aS,6R)-4a-hydroxy-L-erythro-5,6,7,8-tetrahydrobiopterin = (6R)-L-erythro-6,7-dihydrobiopterin + H2O. This is Putative pterin-4-alpha-carbinolamine dehydratase from Vibrio cholerae serotype O1 (strain ATCC 39315 / El Tor Inaba N16961).